A 287-amino-acid polypeptide reads, in one-letter code: Ribosomal RNA small subunit methyltransferase A (287 aa).

Residues asparagine 18, leucine 20, glycine 45, glutamate 66, aspartate 91, and asparagine 118 each contribute to the S-adenosyl-L-methionine site.

The protein belongs to the class I-like SAM-binding methyltransferase superfamily. rRNA adenine N(6)-methyltransferase family. RsmA subfamily.

The protein resides in the cytoplasm. The catalysed reaction is adenosine(1518)/adenosine(1519) in 16S rRNA + 4 S-adenosyl-L-methionine = N(6)-dimethyladenosine(1518)/N(6)-dimethyladenosine(1519) in 16S rRNA + 4 S-adenosyl-L-homocysteine + 4 H(+). In terms of biological role, specifically dimethylates two adjacent adenosines (A1518 and A1519) in the loop of a conserved hairpin near the 3'-end of 16S rRNA in the 30S particle. May play a critical role in biogenesis of 30S subunits. The polypeptide is Ribosomal RNA small subunit methyltransferase A (Haemophilus influenzae (strain PittEE)).